The following is a 540-amino-acid chain: Putative cysteine ligase BshC (540 aa).

Residues glutamate 457 to glutamate 477 adopt a coiled-coil conformation.

Belongs to the BshC family.

In terms of biological role, involved in bacillithiol (BSH) biosynthesis. May catalyze the last step of the pathway, the addition of cysteine to glucosamine malate (GlcN-Mal) to generate BSH. In Shouchella clausii (strain KSM-K16) (Alkalihalobacillus clausii), this protein is Putative cysteine ligase BshC.